The sequence spans 206 residues: Protein Ta0236 (206 aa).

The AMMECR1 domain maps to 16–205 (DIGTKAVRLA…EKDPEGVVEK (190 aa)).

This Thermoplasma acidophilum (strain ATCC 25905 / DSM 1728 / JCM 9062 / NBRC 15155 / AMRC-C165) protein is Protein Ta0236.